A 371-amino-acid chain; its full sequence is Queuine tRNA-ribosyltransferase (371 aa).

The Proton acceptor role is filled by Asp-90. Substrate is bound by residues 90 to 94 (DSGGF), Asp-144, Gln-188, and Gly-215. An RNA binding region spans residues 246–252 (GVGTPED). Asp-265 acts as the Nucleophile in catalysis. Positions 270–274 (TRNAR) are RNA binding; important for wobble base 34 recognition. Zn(2+)-binding residues include Cys-303, Cys-305, Cys-308, and His-334.

It belongs to the queuine tRNA-ribosyltransferase family. As to quaternary structure, homodimer. Within each dimer, one monomer is responsible for RNA recognition and catalysis, while the other monomer binds to the replacement base PreQ1. The cofactor is Zn(2+).

It catalyses the reaction 7-aminomethyl-7-carbaguanine + guanosine(34) in tRNA = 7-aminomethyl-7-carbaguanosine(34) in tRNA + guanine. It functions in the pathway tRNA modification; tRNA-queuosine biosynthesis. In terms of biological role, catalyzes the base-exchange of a guanine (G) residue with the queuine precursor 7-aminomethyl-7-deazaguanine (PreQ1) at position 34 (anticodon wobble position) in tRNAs with GU(N) anticodons (tRNA-Asp, -Asn, -His and -Tyr). Catalysis occurs through a double-displacement mechanism. The nucleophile active site attacks the C1' of nucleotide 34 to detach the guanine base from the RNA, forming a covalent enzyme-RNA intermediate. The proton acceptor active site deprotonates the incoming PreQ1, allowing a nucleophilic attack on the C1' of the ribose to form the product. After dissociation, two additional enzymatic reactions on the tRNA convert PreQ1 to queuine (Q), resulting in the hypermodified nucleoside queuosine (7-(((4,5-cis-dihydroxy-2-cyclopenten-1-yl)amino)methyl)-7-deazaguanosine). In Neisseria meningitidis serogroup C / serotype 2a (strain ATCC 700532 / DSM 15464 / FAM18), this protein is Queuine tRNA-ribosyltransferase.